We begin with the raw amino-acid sequence, 158 residues long: Transcription elongation factor GreA (158 aa).

Positions 45–73 (AEYHAAREQQSFIEGRIKQLESELSHAEI) form a coiled coil.

This sequence belongs to the GreA/GreB family.

Its function is as follows. Necessary for efficient RNA polymerase transcription elongation past template-encoded arresting sites. The arresting sites in DNA have the property of trapping a certain fraction of elongating RNA polymerases that pass through, resulting in locked ternary complexes. Cleavage of the nascent transcript by cleavage factors such as GreA or GreB allows the resumption of elongation from the new 3'terminus. GreA releases sequences of 2 to 3 nucleotides. This chain is Transcription elongation factor GreA, found in Xanthomonas axonopodis pv. citri (strain 306).